We begin with the raw amino-acid sequence, 354 residues long: Probable protein phosphatase 2C 69 (354 aa).

In terms of domain architecture, PPM-type phosphatase spans 33 to 279; sequence SYGYASSAGK…DNITCVVVRF (247 aa). Positions 69, 70, 231, and 270 each coordinate Mn(2+). The segment at 289–354 is disordered; that stretch reads HISSSSSKEA…LERNSVTDKV (66 aa). Polar residues-rich tracts occupy residues 309 to 328 and 336 to 348; these read ISSN…PENV and ASRS…LERN.

The protein belongs to the PP2C family. The cofactor is Mg(2+). It depends on Mn(2+) as a cofactor.

It carries out the reaction O-phospho-L-seryl-[protein] + H2O = L-seryl-[protein] + phosphate. The catalysed reaction is O-phospho-L-threonyl-[protein] + H2O = L-threonyl-[protein] + phosphate. The sequence is that of Probable protein phosphatase 2C 69 from Arabidopsis thaliana (Mouse-ear cress).